A 338-amino-acid chain; its full sequence is Phenylalanine--tRNA ligase alpha subunit (338 aa).

Residue glutamate 252 coordinates Mg(2+).

The protein belongs to the class-II aminoacyl-tRNA synthetase family. Phe-tRNA synthetase alpha subunit type 1 subfamily. In terms of assembly, tetramer of two alpha and two beta subunits. The cofactor is Mg(2+).

The protein resides in the cytoplasm. It carries out the reaction tRNA(Phe) + L-phenylalanine + ATP = L-phenylalanyl-tRNA(Phe) + AMP + diphosphate + H(+). This is Phenylalanine--tRNA ligase alpha subunit from Azotobacter vinelandii (strain DJ / ATCC BAA-1303).